The sequence spans 351 residues: Ribosomal RNA large subunit methyltransferase N (351 aa).

Glutamate 92 serves as the catalytic Proton acceptor. The Radical SAM core domain occupies 105-337 (GHPRSTICVS…CTVRVEKGTE (233 aa)). A disulfide bond links cysteine 112 and cysteine 342. [4Fe-4S] cluster is bound by residues cysteine 119, cysteine 123, and cysteine 126. Residues 169-170 (GE), serine 201, 224-226 (SLH), and asparagine 300 contribute to the S-adenosyl-L-methionine site. Cysteine 342 acts as the S-methylcysteine intermediate in catalysis.

Belongs to the radical SAM superfamily. RlmN family. [4Fe-4S] cluster is required as a cofactor.

Its subcellular location is the cytoplasm. It carries out the reaction adenosine(2503) in 23S rRNA + 2 reduced [2Fe-2S]-[ferredoxin] + 2 S-adenosyl-L-methionine = 2-methyladenosine(2503) in 23S rRNA + 5'-deoxyadenosine + L-methionine + 2 oxidized [2Fe-2S]-[ferredoxin] + S-adenosyl-L-homocysteine. Functionally, specifically methylates position 2 of adenine 2503 in 23S rRNA. This Nitrosopumilus maritimus (strain SCM1) protein is Ribosomal RNA large subunit methyltransferase N.